The following is a 284-amino-acid chain: MQKETSIFLPSQVTVKVHPVVIFNILDHYIRRNVGQDRVIGTLLGFNNDGVLEIRNCFPVVHSETEQIAVEMEYQRKMLDLHLKSSPREPIIGWYATGNDINENSVHINNFYRDEMGNSTPIHLTVDTGLTNDTMGIHAYMAHNLSLNPESSLGSYFSQLPLEILTFEAENAGLESIAQTKYDQQSTSLLSELESLQGSLTKLDEMLESITSYIESVEKGEIQGDPRLGRFLAKTIQALPKANAQVMDKVINNSVKDLLMIVYLSSLTRSQLAVATKISHSLSN.

The 132-residue stretch at 15–146 (VKVHPVVIFN…IHAYMAHNLS (132 aa)) folds into the MPN domain.

This sequence belongs to the eIF-3 subunit F family. In terms of assembly, component of the eukaryotic translation initiation factor 3 (eIF-3) complex.

Its subcellular location is the cytoplasm. Its function is as follows. Component of the eukaryotic translation initiation factor 3 (eIF-3) complex, which is involved in protein synthesis of a specialized repertoire of mRNAs and, together with other initiation factors, stimulates binding of mRNA and methionyl-tRNAi to the 40S ribosome. The eIF-3 complex specifically targets and initiates translation of a subset of mRNAs involved in cell proliferation. This chain is Eukaryotic translation initiation factor 3 subunit F (eif3f), found in Dictyostelium discoideum (Social amoeba).